Reading from the N-terminus, the 395-residue chain is Vibriobactin-specific isochorismate synthase (395 aa).

This sequence belongs to the isochorismate synthase family.

It catalyses the reaction chorismate = isochorismate. Its pathway is siderophore biosynthesis; vibriobactin biosynthesis. This is Vibriobactin-specific isochorismate synthase (vibC) from Vibrio cholerae serotype O1 (strain ATCC 39315 / El Tor Inaba N16961).